The chain runs to 204 residues: MSEKPAFVSVQQSLRKSFDAIEPLHEEWNNTLLECNPHLTSLSNLAEQLQACQRVLFKKTPLSSFINLQEHLRFKLQAAMEFNLEILNQKLSTLQRIRDSVSQVVGSVLYMYETSIEKIGLEAILERSSLCPSIADMLEWLQDIEKHYRNQYLQRKLLLQVCGGHLSDIQALPQSWAKQRDAASSKQQHVEDILLSVSFFRMST.

Part of the 55LCC heterohexameric ATPase complex. Does not associate with pre-60S ribosomal particles.

It localises to the nucleus. The protein resides in the cytoplasm. Functionally, part of the 55LCC heterohexameric ATPase complex which is chromatin-associated and promotes replisome proteostasis to maintain replication fork progression and genome stability. Required for replication fork progression, sister chromatid cohesion, and chromosome stability. The ATPase activity is specifically enhanced by replication fork DNA and is coupled to cysteine protease-dependent cleavage of replisome substrates in response to replication fork damage. Uses ATPase activity to process replisome substrates in S-phase, facilitating their proteolytic turnover from chromatin to ensure DNA replication and mitotic fidelity. Involved in the cytoplasmic maturation steps of pre-60S ribosomal particles by promoting the release of shuttling protein RSL24D1/RLP24 from the pre-ribosomal particles. This chain is AFG2-interacting ribosome maturation factor (airim), found in Xenopus tropicalis (Western clawed frog).